We begin with the raw amino-acid sequence, 686 residues long: Bromodomain-containing factor 1 (686 aa).

Disordered regions lie at residues 1 to 69 and 85 to 150; these read MTDI…PAGL and NGYN…NPIP. The span at 9–25 shows a compositional bias: low complexity; it reads NDVDVNGNNVNDDVSSN. Over residues 99 to 120 the composition is skewed to basic and acidic residues; the sequence is QGLKKEEGGQGTKQEDLDENSK. Residues 130 to 139 are compositionally biased toward pro residues; it reads EPAPAPPPEP. Residues 145–254 enclose the Bromo 1 domain; it reads PQNPIPKHQQ…ASFEKHMLNM (110 aa). At Ser-270 the chain carries Phosphoserine. The interval 283–304 is disordered; sequence QTHNGRPKRTIHPPKSKDIYPY. Over residues 287-296 the composition is skewed to basic residues; that stretch reads GRPKRTIHPP. The Bromo 2 domain occupies 312–421; it reads KRLQQAMKFC…EVFNSKWADR (110 aa). Disordered regions lie at residues 424–447, 486–523, 594–636, and 649–686; these read LDDY…SEYS, IRKE…KKNK, SSGA…EQSR, and DSAS…SEEE. Position 429 is a phosphoserine (Ser-429). Residues 438–447 show a composition bias toward acidic residues; that stretch reads DYDDYESEYS. Positions 460-499 form a coiled coil; sequence AIQYLEEQLARMKVELQQLKKQELEKIRKERRLARGSKKR. Residues 488-507 show a composition bias toward basic residues; sequence KERRLARGSKKRGKRSKGRS. An NET domain is found at 518 to 598; that stretch reads RDKKNKLKTV…RQYESSSGAS (81 aa). 2 stretches are compositionally biased toward polar residues: residues 594–620 and 652–671; these read SSGA…TSAG and SPLS…HNGF. Phosphoserine occurs at positions 615 and 659. Residues 675–686 show a composition bias toward acidic residues; that stretch reads SDDDVSSESEEE.

The protein belongs to the BET family. In terms of assembly, interacts with the TFIID subunit TAF7 and with acetylated histones H3 and H4. Phosphorylated by the casein kinase CK2 complex.

The protein resides in the nucleus. Transcription factor involved in the expression of a broad class of genes including snRNAs. Required for sporulation and DNA-damage repair. Prevents the spreading of SIR silencing at telomeres and protects histone H4, but not H3, from deacetylation. This is Bromodomain-containing factor 1 (BDF1) from Saccharomyces cerevisiae (strain ATCC 204508 / S288c) (Baker's yeast).